We begin with the raw amino-acid sequence, 387 residues long: Acetylserotonin O-methyltransferase (387 aa).

S-adenosyl-L-methionine-binding positions include Tyr-153, Trp-170, Glu-216, 246-248, and Arg-263; that span reads GDF. His-266 functions as the Proton donor/acceptor in the catalytic mechanism. Positions 267 and 317 each coordinate substrate. Residues 355 to 387 form a disordered region; that stretch reads ARGGGAGARSDGGGGEATSQTGSGTGREVGAQD. The span at 356-370 shows a compositional bias: gly residues; the sequence is RGGGAGARSDGGGGE.

Belongs to the class I-like SAM-binding methyltransferase superfamily. Cation-independent O-methyltransferase family. Homodimer.

The enzyme catalyses N-acetylserotonin + S-adenosyl-L-methionine = melatonin + S-adenosyl-L-homocysteine + H(+). Its pathway is aromatic compound metabolism; melatonin biosynthesis; melatonin from serotonin: step 1/2. Functionally, catalyzes the transfer of a methyl group onto N-acetylserotonin, producing melatonin (N-acetyl-5-methoxytryptamine). The chain is Acetylserotonin O-methyltransferase (Asmt) from Mus musculus molossinus (Japanese house mouse).